The chain runs to 184 residues: Ribosome-recycling factor (184 aa).

The tract at residues 141 to 161 (KKNDKAISEDDQRKGQDDVQK) is disordered.

Belongs to the RRF family.

Its subcellular location is the cytoplasm. Its function is as follows. Responsible for the release of ribosomes from messenger RNA at the termination of protein biosynthesis. May increase the efficiency of translation by recycling ribosomes from one round of translation to another. In Solidesulfovibrio magneticus (strain ATCC 700980 / DSM 13731 / RS-1) (Desulfovibrio magneticus), this protein is Ribosome-recycling factor.